A 506-amino-acid polypeptide reads, in one-letter code: ATP synthase subunit alpha (506 aa).

170–177 (GDRQTGKT) serves as a coordination point for ATP.

It belongs to the ATPase alpha/beta chains family. F-type ATPases have 2 components, CF(1) - the catalytic core - and CF(0) - the membrane proton channel. CF(1) has five subunits: alpha(3), beta(3), gamma(1), delta(1), epsilon(1). CF(0) has four main subunits: a(1), b(1), b'(1) and c(9-12).

Its subcellular location is the cellular thylakoid membrane. The enzyme catalyses ATP + H2O + 4 H(+)(in) = ADP + phosphate + 5 H(+)(out). Produces ATP from ADP in the presence of a proton gradient across the membrane. The alpha chain is a regulatory subunit. The chain is ATP synthase subunit alpha from Synechococcus sp. (strain JA-3-3Ab) (Cyanobacteria bacterium Yellowstone A-Prime).